Here is a 480-residue protein sequence, read N- to C-terminus: Adenosylhomocysteinase (480 aa).

T63, D142, and E203 together coordinate substrate. 204–206 (TTT) provides a ligand contact to NAD(+). Substrate contacts are provided by K233 and D237. NAD(+) is bound by residues N238, 267-272 (GYGDVG), E290, N325, 346-348 (IGH), and N394.

Belongs to the adenosylhomocysteinase family. Requires NAD(+) as cofactor.

The protein resides in the cytoplasm. It carries out the reaction S-adenosyl-L-homocysteine + H2O = L-homocysteine + adenosine. Its pathway is amino-acid biosynthesis; L-homocysteine biosynthesis; L-homocysteine from S-adenosyl-L-homocysteine: step 1/1. In terms of biological role, may play a key role in the regulation of the intracellular concentration of adenosylhomocysteine. This Xanthomonas campestris pv. campestris (strain 8004) protein is Adenosylhomocysteinase.